The sequence spans 1114 residues: Putative surface protein SAV2496/SAV2497 (1114 aa).

Residues 1–50 (MRDKKGPVNKRVDFLSNKLNKYSIRKFTVGTASILIGSLMYLGTQQEAEA) form the signal peptide. Disordered stretches follow at residues 76-116 (TNKD…EDTP), 440-473 (KFNP…NPLT), and 496-1088 (EYGP…TGLE). 5 stretches are compositionally biased toward basic and acidic residues: residues 96-116 (DTIE…EDTP), 451-461 (KVTREGQKGEK), 505-523 (GHRD…EEVP), 554-570 (SIVE…RKFN), and 579-589 (KVTREGQKGEK). The G5 1 domain maps to 419 to 501 (SAKNNNRIRK…NELTEYGPET (83 aa)). The 82-residue stretch at 547–628 (YGPVKGDSIV…NELTEYGPET (82 aa)) folds into the G5 2 domain. A compositionally biased stretch (low complexity) spans 590–604 (TTTPTLKNPLTGEII). 11 stretches are compositionally biased toward basic and acidic residues: residues 605–618 (SKGE…KDPI), 632–650 (GHRD…EEVP), 681–697 (SIVE…RKFN), 706–716 (KVTREGQKGEK), 733–746 (SKGE…KDPI), 760–778 (GHRD…EEVP), 809–825 (SIVE…RKFN), 834–844 (KVTREGQKGEK), 861–874 (SKGE…KDPV), 918–929 (KVIEEPVDDVIK), and 946–965 (FETK…RVKQ). In terms of domain architecture, G5 3 spans 674–756 (YGPVKGDSIV…NELTEYGPET (83 aa)). One can recognise a G5 4 domain in the interval 802-884 (YGPVKGDSIV…NELTEFGGEK (83 aa)). One can recognise a G5 5 domain in the interval 930–1012 (HGPKTGTPET…DKIVEFGGEK (83 aa)). Polar residues predominate over residues 968–982 (QPGSKTITTPITVNP). A compositionally biased stretch (basic and acidic residues) spans 996–1026 (EITKQPVDKIVEFGGEKPKDPKGPENPEKPS). An LPXTG sorting signal motif is present at residues 1082–1086 (LPKTG). T1085 is subject to Pentaglycyl murein peptidoglycan amidated threonine. Residues 1086–1114 (GLESTQKGLIFSSIIGIAGLMLLARRRKN) constitute a propeptide, removed by sortase.

It localises to the secreted. Its subcellular location is the cell wall. This is Putative surface protein SAV2496/SAV2497 from Staphylococcus aureus (strain Mu50 / ATCC 700699).